A 340-amino-acid chain; its full sequence is Heat-inducible transcription repressor HrcA (340 aa).

The protein belongs to the HrcA family.

Functionally, negative regulator of class I heat shock genes (grpE-dnaK-dnaJ and groELS operons). Prevents heat-shock induction of these operons. This chain is Heat-inducible transcription repressor HrcA, found in Phytoplasma australiense.